A 350-amino-acid chain; its full sequence is UDP-N-acetylenolpyruvoylglucosamine reductase (350 aa).

Residues 25 to 194 (VGPVARRLIT…LDVGGRSAPL (170 aa)) form the FAD-binding PCMH-type domain. Residue Arg166 is part of the active site. The Proton donor role is filled by Ser243. Glu342 is a catalytic residue.

This sequence belongs to the MurB family. The cofactor is FAD.

The protein localises to the cytoplasm. The enzyme catalyses UDP-N-acetyl-alpha-D-muramate + NADP(+) = UDP-N-acetyl-3-O-(1-carboxyvinyl)-alpha-D-glucosamine + NADPH + H(+). It functions in the pathway cell wall biogenesis; peptidoglycan biosynthesis. Cell wall formation. The chain is UDP-N-acetylenolpyruvoylglucosamine reductase from Mycobacterium sp. (strain MCS).